Here is an 852-residue protein sequence, read N- to C-terminus: Protein SEY1 (852 aa).

Residues 1–738 (MNGHFAAIGN…KRSAIGGITQ (738 aa)) lie on the Cytoplasmic side of the membrane. Residues 47–294 (GFNYHLISVF…IPADGLSVYA (248 aa)) enclose the GB1/RHD3-type G domain. 57-64 (GSQSTGKS) is a GTP binding site. A coiled-coil region spans residues 475–500 (QYKLFEKELDEVSARLRKEEMRRLAI). Residues 739–759 (VPLYFYVILLILGWNEILMVL) form a helical membrane-spanning segment. Over 760 to 762 (RNP) the chain is Lumenal. A helical membrane pass occupies residues 763 to 783 (FLILLILVMGGGTYIAYSLNL). At 784 to 852 (LGPMMQMSNA…AQDISDDDDI (69 aa)) the chain is on the cytoplasmic side.

The protein belongs to the TRAFAC class dynamin-like GTPase superfamily. GB1/RHD3 GTPase family. RHD3 subfamily.

The protein localises to the endoplasmic reticulum membrane. In terms of biological role, cooperates with the reticulon proteins and tubule-shaping DP1 family proteins to generate and maintain the structure of the tubular endoplasmic reticulum network. Has GTPase activity, which is required for its function in ER organization. This chain is Protein SEY1, found in Podospora anserina (strain S / ATCC MYA-4624 / DSM 980 / FGSC 10383) (Pleurage anserina).